The sequence spans 210 residues: N-(5'-phosphoribosyl)anthranilate isomerase (210 aa).

Belongs to the TrpF family.

It catalyses the reaction N-(5-phospho-beta-D-ribosyl)anthranilate = 1-(2-carboxyphenylamino)-1-deoxy-D-ribulose 5-phosphate. It functions in the pathway amino-acid biosynthesis; L-tryptophan biosynthesis; L-tryptophan from chorismate: step 3/5. The protein is N-(5'-phosphoribosyl)anthranilate isomerase of Crocosphaera subtropica (strain ATCC 51142 / BH68) (Cyanothece sp. (strain ATCC 51142)).